The primary structure comprises 135 residues: Large ribosomal subunit protein uL16c (135 aa).

Belongs to the universal ribosomal protein uL16 family. Part of the 50S ribosomal subunit.

It is found in the plastid. The protein resides in the chloroplast. This is Large ribosomal subunit protein uL16c from Daucus carota (Wild carrot).